A 247-amino-acid chain; its full sequence is Carboxy-S-adenosyl-L-methionine synthase (247 aa).

Residues Tyr-39, 64 to 66 (GCS), 89 to 90 (DN), 117 to 118 (DI), Asn-132, and Arg-199 contribute to the S-adenosyl-L-methionine site.

This sequence belongs to the class I-like SAM-binding methyltransferase superfamily. Cx-SAM synthase family. In terms of assembly, homodimer.

The catalysed reaction is prephenate + S-adenosyl-L-methionine = carboxy-S-adenosyl-L-methionine + 3-phenylpyruvate + H2O. Functionally, catalyzes the conversion of S-adenosyl-L-methionine (SAM) to carboxy-S-adenosyl-L-methionine (Cx-SAM). This Escherichia fergusonii (strain ATCC 35469 / DSM 13698 / CCUG 18766 / IAM 14443 / JCM 21226 / LMG 7866 / NBRC 102419 / NCTC 12128 / CDC 0568-73) protein is Carboxy-S-adenosyl-L-methionine synthase.